The sequence spans 586 residues: Arrestin-related trafficking adapter 5 (586 aa).

2 disordered regions span residues 123–145 (GENA…DMDT) and 182–217 (ENGV…YSNR). Positions 126–145 (AENQHNSSSGRSTSNQDMDT) are enriched in polar residues. Residues 199-216 (SRSSSSNTLNNNSHSYSN) are compositionally biased toward low complexity. Residue Lys-364 forms a Glycyl lysine isopeptide (Lys-Gly) (interchain with G-Cter in ubiquitin) linkage.

It belongs to the arrestin family. As to quaternary structure, interacts with RSP5. In terms of processing, ubiquitinated by RSP5.

Its function is as follows. May regulate endocytosis by recruiting RSP5 ubiquitin ligase activity to specific plasma membrane proteins in response to extracellular stimuli. This is Arrestin-related trafficking adapter 5 (ART5) from Saccharomyces cerevisiae (strain ATCC 204508 / S288c) (Baker's yeast).